The following is a 258-amino-acid chain: uncharacterized protein (258 aa).

36 to 43 (GKAGTGKS) contacts ATP.

The protein belongs to the IIV-6 075L family.

This is an uncharacterized protein from Acheta domesticus (House cricket).